The following is a 1886-amino-acid chain: Nuclear pore membrane glycoprotein 210 (1886 aa).

The first 26 residues, 1-26 (MARASLVQPALWALLLLQVVGPAAAA), serve as a signal peptide directing secretion. Over 27–1808 (KLNIPKVLLP…LLSHFLDSYQ (1782 aa)) the chain is Perinuclear space. Residues Asn-44, Asn-337, Asn-405, Asn-484, Asn-681, Asn-801, Asn-926, Asn-1039, Asn-1116, Asn-1135, Asn-1362, and Asn-1441 are each glycosylated (N-linked (GlcNAc...) asparagine). The BIG2 domain occupies 1078–1151 (FPPFRLIPRK…VQAVDAETGK (74 aa)). Residues 1809–1829 (VMFFTFFALLAGTAVTIIAYH) traverse the membrane as a helical segment. The Cytoplasmic portion of the chain corresponds to 1830 to 1886 (TVCAPRELASPLALTPRASPQHSPHYLASSPAAFNTLPSGRKASPPSGLWSPAYASH). Ser-1839 is subject to Phosphoserine. Thr-1844 bears the Phosphothreonine mark. Phosphoserine is present on residues Ser-1873, Ser-1876, Ser-1880, and Ser-1885.

It belongs to the NUP210 family. Forms dimers and possibly higher-order oligomers. Post-translationally, N-glycosylated, but not all potential glycosylation sites may be used. Contains high-mannose type oligosaccharides. Phosphorylated at Ser-1880 in mitosis specifically; not phosphorylated in interphase.

It localises to the nucleus. Its subcellular location is the nuclear pore complex. The protein localises to the nucleus membrane. The protein resides in the endoplasmic reticulum membrane. In terms of biological role, nucleoporin essential for nuclear pore assembly and fusion, nuclear pore spacing, as well as structural integrity. This chain is Nuclear pore membrane glycoprotein 210 (Nup210), found in Mus musculus (Mouse).